A 363-amino-acid polypeptide reads, in one-letter code: Cleavage and termination factor 1 (363 aa).

In terms of domain architecture, RRM spans 7-85; it reads NVVFVGNIPY…RKIRVEFPSN (79 aa). A disordered region spans residues 291-325; that stretch reads QPASATSSPPSVPQKIPSSNHKSQQANGSDQGNEG. A compositionally biased stretch (polar residues) spans 306 to 322; the sequence is IPSSNHKSQQANGSDQG.

Interacts with res2.

It is found in the nucleus. Functionally, component of the cleavage factor I (CF I) involved in pre-mRNA 3'-end processing. This is Cleavage and termination factor 1 (ctf1) from Schizosaccharomyces pombe (strain 972 / ATCC 24843) (Fission yeast).